An 827-amino-acid chain; its full sequence is 4-hydroxy-3-methylbut-2-enyl diphosphate reductase (827 aa).

Positions 1 to 284 (MEIIRAKHMG…MNIEKKVRGI (284 aa)) are 4-hydroxy-3-methylbut-2-enyl diphosphate reductase. [4Fe-4S] cluster is bound at residue C12. (2E)-4-hydroxy-3-methylbut-2-enyl diphosphate-binding residues include H40 and H79. The dimethylallyl diphosphate site is built by H40 and H79. Isopentenyl diphosphate is bound by residues H40 and H79. Residue C101 participates in [4Fe-4S] cluster binding. A (2E)-4-hydroxy-3-methylbut-2-enyl diphosphate-binding site is contributed by H129. A dimethylallyl diphosphate-binding site is contributed by H129. H129 contributes to the isopentenyl diphosphate binding site. Catalysis depends on E131, which acts as the Proton donor. T168 contributes to the (2E)-4-hydroxy-3-methylbut-2-enyl diphosphate binding site. [4Fe-4S] cluster is bound at residue C196. The (2E)-4-hydroxy-3-methylbut-2-enyl diphosphate site is built by S224, S225, N226, and S268. Residues S224, S225, N226, and S268 each coordinate dimethylallyl diphosphate. S224, S225, N226, and S268 together coordinate isopentenyl diphosphate. S1 motif domains lie at 477 to 545 (GQIV…LSIK), 562 to 632 (DDEI…LGIK), 649 to 716 (DTVI…GSLK), and 733 to 802 (GTTV…LSIK).

This sequence in the N-terminal section; belongs to the IspH family. [4Fe-4S] cluster is required as a cofactor.

It catalyses the reaction isopentenyl diphosphate + 2 oxidized [2Fe-2S]-[ferredoxin] + H2O = (2E)-4-hydroxy-3-methylbut-2-enyl diphosphate + 2 reduced [2Fe-2S]-[ferredoxin] + 2 H(+). The catalysed reaction is dimethylallyl diphosphate + 2 oxidized [2Fe-2S]-[ferredoxin] + H2O = (2E)-4-hydroxy-3-methylbut-2-enyl diphosphate + 2 reduced [2Fe-2S]-[ferredoxin] + 2 H(+). Its pathway is isoprenoid biosynthesis; dimethylallyl diphosphate biosynthesis; dimethylallyl diphosphate from (2E)-4-hydroxy-3-methylbutenyl diphosphate: step 1/1. It participates in isoprenoid biosynthesis; isopentenyl diphosphate biosynthesis via DXP pathway; isopentenyl diphosphate from 1-deoxy-D-xylulose 5-phosphate: step 6/6. Catalyzes the conversion of 1-hydroxy-2-methyl-2-(E)-butenyl 4-diphosphate (HMBPP) into a mixture of isopentenyl diphosphate (IPP) and dimethylallyl diphosphate (DMAPP). Acts in the terminal step of the DOXP/MEP pathway for isoprenoid precursor biosynthesis. In Fusobacterium nucleatum subsp. nucleatum (strain ATCC 25586 / DSM 15643 / BCRC 10681 / CIP 101130 / JCM 8532 / KCTC 2640 / LMG 13131 / VPI 4355), this protein is 4-hydroxy-3-methylbut-2-enyl diphosphate reductase.